We begin with the raw amino-acid sequence, 574 residues long: MNDEGDLLQENTRDEGNETEASRMSKLRRTRKKVTKQHIFSTEVGEMDVSNSKERIRSQMVCHTLGNMSKPVVGPGSADSHLPQDDKDSENQTTVIKPSPLKTSASAPCSEFNTNSNHADNTWEDTQIPTTPHLSSRMKHIKQEMAKNHLQFVRFEATDLHGVSRSKSIPAHFFQEKVIHGVCMPRGYLELIPNPKDDEVDHIRATCFNSDIVLMPELSTFRVLPWAERTARVICDTFTVTGEPLLTSPRYIAKRQLSQLQDSGFSLLSAFIYDFCIFAVPEIINSKTISFPASTLLNNHDQPFIQELVDGLYHTGANVESFSSSTRPGQMEICFLPEFGISSADNAFTLRTGVKEVARKYNYIASFFIETGFCNSGILSHSLWDVDGKKNMFCSSSGIEELTITGKKWLAGLLKHSAALSCLMAPAVSCRKRYSKESKDLKESVPTTWGYNDNSCAFNIKCHGEKGTRIENKLGSATANPYLVLAATVAAGLDGLQSSDGVLASPGDSTDLYPSKPSEIPLKLEDALVALEEDQCLRQALGETFIRYFVAMKKYDLENEETDAERNKFLEYFI.

Disordered regions lie at residues Met-1–Lys-36 and Gly-66–Thr-131. Residues Asn-11–Arg-23 show a composition bias toward basic and acidic residues. The span at Ser-25 to Lys-36 shows a compositional bias: basic residues. Residues Asn-91–Thr-131 are compositionally biased toward polar residues. A GS beta-grasp domain is found at Asn-148–Gly-242. The GS catalytic domain maps to Pro-249–Ile-574.

The protein belongs to the glutamine synthetase family. As to quaternary structure, dodecamer. Interacts with BFSP2 and VIM.

Its function is as follows. May act as a component of the cytoskeleton or as a chaperone for the reorganization of intermediate filament proteins during terminal differentiation in the lens. Does not seem to have enzymatic activity. The chain is Lengsin (LGSN) from Canis lupus familiaris (Dog).